A 609-amino-acid chain; its full sequence is Vanadium chloroperoxidase (609 aa).

Vanadate contacts are provided by K353, R360, S402, G403, H404, R490, and H496. H404 acts as the Proton donor in catalysis. Positions 569–609 (KPTPPEIQPMPQETPVQKPVGQQPVKGMWEEEQAPVVKEAP) are disordered.

This sequence belongs to the vanadium-dependent haloperoxidase family. In terms of assembly, homotetramer. Vanadate serves as cofactor. Post-translationally, the N-terminus is blocked.

It is found in the secreted. It carries out the reaction RH + Cl(-) + H2O2 = RCl + 2 H2O.. Functionally, catalyzes the oxidation of chloride in the presence of hydrogen peroxide to hypochlorous acid (ClOH), which in turn can react with a nucleophilic acceptor (RH), to form a chlorinated compound. This chain is Vanadium chloroperoxidase (CPO), found in Curvularia inaequalis (Helminthosporium inaequale).